We begin with the raw amino-acid sequence, 368 residues long: MTVTGIIAEFNPFHNGHKYLLETAEGLKIIAMSGNFMQRGEPALIDKWIRSEMALKNGADIVVELPFFVSVQSADYFAQGAIDILCQLGIQQLAFGTENVIDYQKLIKVYEKKSEQMTAYLSTLEDTLSYPQKTQKMWEIFAGVKFSGQTPNHILGLSYAKASAGKHIQLCPIKRQGAAYHSKDKNHLLASASAIRQHLNDWDFISHSVPNAGLLINNPHMSWDHYFSFLKYQILNHSDLTSIFQVNDELASRIKKAIKVSQNIDHLVDTVATKRYTKARVRRILTYILVNAKEPTLPKGIHILGFTSKGQAHLKKLKKSRPLITRIGAETWDEMTQKADSIYQLGHQDIPEQSFGRIPIIIKNERLN.

Residues 7–20, Gly96, Asn152, and Arg175 contribute to the ATP site; that span reads IAEF…HKYL.

This sequence belongs to the TmcAL family.

It is found in the cytoplasm. It carries out the reaction cytidine(34) in elongator tRNA(Met) + acetate + ATP = N(4)-acetylcytidine(34) in elongator tRNA(Met) + AMP + diphosphate. Catalyzes the formation of N(4)-acetylcytidine (ac(4)C) at the wobble position of elongator tRNA(Met), using acetate and ATP as substrates. First activates an acetate ion to form acetyladenylate (Ac-AMP) and then transfers the acetyl group to tRNA to form ac(4)C34. The chain is tRNA(Met) cytidine acetate ligase from Streptococcus pyogenes serotype M3 (strain SSI-1).